We begin with the raw amino-acid sequence, 85 residues long: Colicin E3 immunity protein (85 aa).

Belongs to the cloacin immunity protein family. Native colicin E3 is a 1:1 complex of A chain and protein B (Im3). Binds between the translocation and cytotoxic RNase domains of intact ColE3, blocking access to the 16S rRNA substrate. Forms a very tight 1:1 complex with the cytotoxic fragment (residues 456-551) of ColE3 (ceaC).

In terms of biological role, the cognate immunity protein for colicin E3 (ColE3), protects cells which harbor the plasmid ColE3 against the toxic action of ColE3. This protein inhibits the 16S RNA hydrolyzing activity of ColE3 by binding with very high affinity to the C-terminal catalytic domain of ColE3. This is Colicin E3 immunity protein from Escherichia coli.